Here is a 127-residue protein sequence, read N- to C-terminus: Fluoride-specific ion channel FluC (127 aa).

The next 4 membrane-spanning stretches (helical) occupy residues 4 to 24, 35 to 55, 71 to 91, and 103 to 123; these read LLLA…MLSM, IGTL…FAWF, TGFC…VFLL, and VLIN…LFSA. Glycine 75 and threonine 78 together coordinate Na(+).

It belongs to the fluoride channel Fluc/FEX (TC 1.A.43) family.

It is found in the cell inner membrane. The enzyme catalyses fluoride(in) = fluoride(out). With respect to regulation, na(+) is not transported, but it plays an essential structural role and its presence is essential for fluoride channel function. Its function is as follows. Fluoride-specific ion channel. Important for reducing fluoride concentration in the cell, thus reducing its toxicity. The chain is Fluoride-specific ion channel FluC from Salmonella agona (strain SL483).